The chain runs to 591 residues: L-fucose isomerase (591 aa).

Residues Glu337 and Asp361 each act as proton acceptor in the active site. Residues Glu337, Asp361, and His528 each contribute to the Mn(2+) site.

This sequence belongs to the L-fucose isomerase family. In terms of assembly, homohexamer. The cofactor is Mn(2+).

Its subcellular location is the cytoplasm. The catalysed reaction is L-fucose = L-fuculose. The protein operates within carbohydrate degradation; L-fucose degradation; L-lactaldehyde and glycerone phosphate from L-fucose: step 1/3. Its function is as follows. Converts the aldose L-fucose into the corresponding ketose L-fuculose. The chain is L-fucose isomerase from Escherichia coli O139:H28 (strain E24377A / ETEC).